Here is a 377-residue protein sequence, read N- to C-terminus: MAIKVLVVDDSSFFRRRVSEIINSESRLEVIDVAVNGKEAVEKAARLKPDVITMDIEMPVMDGISAVREIMANNPVPILMFSSLTHDGAKATLDALDAGALDFLPKKFEDIARNRDEAVTLLQQRVLSIASKKMFLRRPAAPRPAPTTSIAASSSLSQERAAATSPLGNRPSTAVSAATRFKASGKKYQLTAIGTSTGGPVALQKILTKLPVNYPHPIVLIQHMPATFTAAFASRLNSLCKIEVKEAEDGDMLRPGVAYLAPGGKQMMLDGRPGAARLRIIDGGDRMNYKPCVDVTFGSAAKIFGDKVLSMILTGMGADGREGARMLKQAGATIWAQDEESCVVYGMPQAVAKAGISTEDLPLERIAERMLVEVGLA.

The Response regulatory domain maps to 4 to 121; sequence KVLVVDDSSF…ARNRDEAVTL (118 aa). A 4-aspartylphosphate modification is found at Asp-55. The tract at residues 138–170 is disordered; that stretch reads RPAAPRPAPTTSIAASSSLSQERAAATSPLGNR. A compositionally biased stretch (low complexity) spans 146–157; the sequence is PTTSIAASSSLS. One can recognise a CheB-type methylesterase domain in the interval 184–377; that stretch reads SGKKYQLTAI…ERMLVEVGLA (194 aa). Residues Ser-196, His-223, and Asp-319 contribute to the active site.

Belongs to the CheB family. Phosphorylated by CheA. Phosphorylation of the N-terminal regulatory domain activates the methylesterase activity.

The protein resides in the cytoplasm. The catalysed reaction is [protein]-L-glutamate 5-O-methyl ester + H2O = L-glutamyl-[protein] + methanol + H(+). It carries out the reaction L-glutaminyl-[protein] + H2O = L-glutamyl-[protein] + NH4(+). In terms of biological role, involved in chemotaxis. Part of a chemotaxis signal transduction system that modulates chemotaxis in response to various stimuli. Catalyzes the demethylation of specific methylglutamate residues introduced into the chemoreceptors (methyl-accepting chemotaxis proteins or MCP) by CheR. Also mediates the irreversible deamidation of specific glutamine residues to glutamic acid. This is Protein-glutamate methylesterase/protein-glutamine glutaminase 1 from Vibrio cholerae serotype O1 (strain ATCC 39315 / El Tor Inaba N16961).